The following is a 2309-amino-acid chain: Collagen alpha-4(VI) chain (2309 aa).

The first 22 residues, 1 to 22 (MGTWKTFWLIISLAAGLGFVKS), serve as a signal peptide directing secretion. A nonhelical region region spans residues 21-1410 (KSQRIVCREA…TCCNMYAKCY (1390 aa)). 6 VWFA domains span residues 34–206 (DIVF…AQKL), 235–413 (DIVF…LQAL), 430–653 (DVVF…FQRV), 634–811 (DLVF…GNKL), 849–1018 (DIYF…IRDI), and 1030–1199 (DIIF…EKEI). Asparagine 188 carries an N-linked (GlcNAc...) asparagine glycan. The N-linked (GlcNAc...) asparagine glycan is linked to asparagine 754. Residue asparagine 1114 is glycosylated (N-linked (GlcNAc...) asparagine). A triple-helical region region spans residues 1411-1744 (GDDGIRGEPG…GKMGTKGSKG (334 aa)). Basic and acidic residues predominate over residues 1414-1430 (GIRGEPGSRGEQGERGL). The tract at residues 1414–1746 (GIRGEPGSRG…MGTKGSKGLA (333 aa)) is disordered. Residues 1480–1489 (GEEGVGGLDG) show a composition bias toward gly residues. The Cell attachment site signature appears at 1527–1529 (RGD). Composition is skewed to low complexity over residues 1605–1621 (PRGR…KGDP) and 1650–1669 (PAGE…PGLF). Positions 1745 to 2309 (LADRTPCEIV…EGECLNYVLK (565 aa)) are nonhelical region. VWFA domains follow at residues 1776–1957 (EVVF…ASCT) and 1982–2187 (DLVF…LNLL). The Cell attachment site signature appears at 2208–2210 (RGD). Residues 2262–2300 (ALGSHGKDRADTEDIDQETPAKGRHLGPTHGPCPMGPEE) form a disordered region.

This sequence belongs to the type VI collagen family. As to quaternary structure, trimers composed of three different chains: alpha-1(VI), alpha-2(VI), and alpha-3(VI) or alpha-4(VI) or alpha-5(VI) or alpha-6(VI). Prolines at the third position of the tripeptide repeating unit (G-X-Y) are hydroxylated in some or all of the chains. As to expression, in newborn, it is expressed in lung, kidney, brain, intestine, skin, sternum and, at weak level, calvaria. In adult, it is almost absent with some weak expression in ovary and very weak expression in spleen, lung, uterus and brain.

It localises to the secreted. The protein resides in the extracellular space. Its subcellular location is the extracellular matrix. Collagen VI acts as a cell-binding protein. In Mus musculus (Mouse), this protein is Collagen alpha-4(VI) chain (Col6a4).